The primary structure comprises 310 residues: Malate dehydrogenase (310 aa).

Residues Gly-7–Gly-13 and Asp-34 contribute to the NAD(+) site. Substrate is bound by residues Arg-81 and Arg-87. NAD(+) contacts are provided by residues Asn-94 and Ile-117–Asn-119. Positions 119 and 153 each coordinate substrate. Residue His-177 is the Proton acceptor of the active site. An NAD(+)-binding site is contributed by Met-227.

The protein belongs to the LDH/MDH superfamily. MDH type 1 family. In terms of assembly, homodimer.

It carries out the reaction (S)-malate + NAD(+) = oxaloacetate + NADH + H(+). Its function is as follows. Catalyzes the reversible oxidation of malate to oxaloacetate. The chain is Malate dehydrogenase from Vibrio vulnificus (strain CMCP6).